The sequence spans 78 residues: D-alanyl carrier protein (78 aa).

The Carrier domain occupies 1 to 78 (MAFRENVLEI…MIITQLEALK (78 aa)). Ser-36 is subject to O-(pantetheine 4'-phosphoryl)serine.

This sequence belongs to the DltC family. Post-translationally, 4'-phosphopantetheine is transferred from CoA to a specific serine of apo-DCP.

Its subcellular location is the cytoplasm. It participates in cell wall biogenesis; lipoteichoic acid biosynthesis. In terms of biological role, carrier protein involved in the D-alanylation of lipoteichoic acid (LTA). The loading of thioester-linked D-alanine onto DltC is catalyzed by D-alanine--D-alanyl carrier protein ligase DltA. The DltC-carried D-alanyl group is further transferred to cell membrane phosphatidylglycerol (PG) by forming an ester bond, probably catalyzed by DltD. D-alanylation of LTA plays an important role in modulating the properties of the cell wall in Gram-positive bacteria, influencing the net charge of the cell wall. This Listeria innocua serovar 6a (strain ATCC BAA-680 / CLIP 11262) protein is D-alanyl carrier protein.